We begin with the raw amino-acid sequence, 458 residues long: COBRA-like protein 2 (458 aa).

The first 29 residues, 1–29 (MARFLLGAAAIALLAGVSSLLLMVPFAEA), serve as a signal peptide directing secretion. Residues N38, N163, N171, N211, N236, N318, N333, and N352 are each glycosylated (N-linked (GlcNAc...) asparagine). A helical transmembrane segment spans residues 430–450 (VFLLMSFLVCGTLAFLHNHLV).

The protein belongs to the COBRA family.

The protein localises to the membrane. The sequence is that of COBRA-like protein 2 (BC1L2) from Oryza sativa subsp. japonica (Rice).